A 200-amino-acid polypeptide reads, in one-letter code: Pyridoxal 5'-phosphate synthase subunit PdxT (200 aa).

Gly46–Ser48 is an L-glutamine binding site. Cys78 functions as the Nucleophile in the catalytic mechanism. L-glutamine-binding positions include Arg107 and Ile138–Arg139. Active-site charge relay system residues include His175 and Glu177.

This sequence belongs to the glutaminase PdxT/SNO family. In the presence of PdxS, forms a dodecamer of heterodimers. Only shows activity in the heterodimer.

It carries out the reaction aldehydo-D-ribose 5-phosphate + D-glyceraldehyde 3-phosphate + L-glutamine = pyridoxal 5'-phosphate + L-glutamate + phosphate + 3 H2O + H(+). The catalysed reaction is L-glutamine + H2O = L-glutamate + NH4(+). Its pathway is cofactor biosynthesis; pyridoxal 5'-phosphate biosynthesis. Catalyzes the hydrolysis of glutamine to glutamate and ammonia as part of the biosynthesis of pyridoxal 5'-phosphate. The resulting ammonia molecule is channeled to the active site of PdxS. The chain is Pyridoxal 5'-phosphate synthase subunit PdxT from Corynebacterium glutamicum (strain ATCC 13032 / DSM 20300 / JCM 1318 / BCRC 11384 / CCUG 27702 / LMG 3730 / NBRC 12168 / NCIMB 10025 / NRRL B-2784 / 534).